Reading from the N-terminus, the 202-residue chain is ATP-dependent dethiobiotin synthetase BioD (202 aa).

12-17 contributes to the ATP binding site; sequence GIGKTI. Mg(2+) is bound at residue threonine 16. Residue lysine 32 is part of the active site. Serine 36 is a substrate binding site. ATP is bound by residues aspartate 43, 94-97, and 178-180; these read EGAG and PVV. Mg(2+)-binding residues include aspartate 43 and glutamate 94.

This sequence belongs to the dethiobiotin synthetase family. As to quaternary structure, homodimer. Mg(2+) is required as a cofactor.

Its subcellular location is the cytoplasm. The catalysed reaction is (7R,8S)-7,8-diammoniononanoate + CO2 + ATP = (4R,5S)-dethiobiotin + ADP + phosphate + 3 H(+). It functions in the pathway cofactor biosynthesis; biotin biosynthesis; biotin from 7,8-diaminononanoate: step 1/2. Its function is as follows. Catalyzes a mechanistically unusual reaction, the ATP-dependent insertion of CO2 between the N7 and N8 nitrogen atoms of 7,8-diaminopelargonic acid (DAPA, also called 7,8-diammoniononanoate) to form a ureido ring. The polypeptide is ATP-dependent dethiobiotin synthetase BioD (Sphingopyxis alaskensis (strain DSM 13593 / LMG 18877 / RB2256) (Sphingomonas alaskensis)).